Reading from the N-terminus, the 576-residue chain is 2-succinyl-5-enolpyruvyl-6-hydroxy-3-cyclohexene-1-carboxylate synthase (576 aa).

This sequence belongs to the TPP enzyme family. MenD subfamily. In terms of assembly, homodimer. Requires Mg(2+) as cofactor. It depends on Mn(2+) as a cofactor. The cofactor is thiamine diphosphate.

It catalyses the reaction isochorismate + 2-oxoglutarate + H(+) = 5-enolpyruvoyl-6-hydroxy-2-succinyl-cyclohex-3-ene-1-carboxylate + CO2. It functions in the pathway quinol/quinone metabolism; 1,4-dihydroxy-2-naphthoate biosynthesis; 1,4-dihydroxy-2-naphthoate from chorismate: step 2/7. Its pathway is quinol/quinone metabolism; menaquinone biosynthesis. Its function is as follows. Catalyzes the thiamine diphosphate-dependent decarboxylation of 2-oxoglutarate and the subsequent addition of the resulting succinic semialdehyde-thiamine pyrophosphate anion to isochorismate to yield 2-succinyl-5-enolpyruvyl-6-hydroxy-3-cyclohexene-1-carboxylate (SEPHCHC). The polypeptide is 2-succinyl-5-enolpyruvyl-6-hydroxy-3-cyclohexene-1-carboxylate synthase (Aliivibrio fischeri (strain ATCC 700601 / ES114) (Vibrio fischeri)).